Consider the following 245-residue polypeptide: tRNA (guanine-N(1)-)-methyltransferase (245 aa).

Residues G111 and 131–136 (IGDYVL) contribute to the S-adenosyl-L-methionine site.

The protein belongs to the RNA methyltransferase TrmD family. As to quaternary structure, homodimer.

It is found in the cytoplasm. It carries out the reaction guanosine(37) in tRNA + S-adenosyl-L-methionine = N(1)-methylguanosine(37) in tRNA + S-adenosyl-L-homocysteine + H(+). Specifically methylates guanosine-37 in various tRNAs. In Caldicellulosiruptor saccharolyticus (strain ATCC 43494 / DSM 8903 / Tp8T 6331), this protein is tRNA (guanine-N(1)-)-methyltransferase.